A 154-amino-acid chain; its full sequence is Ribonuclease H (154 aa).

Residues 1-142 (MRKQVEIFTD…CDELARAAAS (142 aa)) enclose the RNase H type-1 domain. Mg(2+) contacts are provided by aspartate 10, glutamate 48, aspartate 70, and aspartate 134.

The protein belongs to the RNase H family. In terms of assembly, monomer. It depends on Mg(2+) as a cofactor.

It is found in the cytoplasm. It carries out the reaction Endonucleolytic cleavage to 5'-phosphomonoester.. Endonuclease that specifically degrades the RNA of RNA-DNA hybrids. This chain is Ribonuclease H, found in Pectobacterium atrosepticum (strain SCRI 1043 / ATCC BAA-672) (Erwinia carotovora subsp. atroseptica).